The primary structure comprises 145 residues: Heat shock protein hsp-16.2 (145 aa).

A sHSP domain is found at 32–137 (VCRISPSESS…QGRSIPIQQA (106 aa)).

This sequence belongs to the small heat shock protein (HSP20) family.

The polypeptide is Heat shock protein hsp-16.2 (Caenorhabditis elegans).